A 270-amino-acid polypeptide reads, in one-letter code: 5-deoxy-glucuronate isomerase (270 aa).

It belongs to the isomerase IolB family.

It carries out the reaction 5-deoxy-D-glucuronate = 5-dehydro-2-deoxy-D-gluconate. The protein operates within polyol metabolism; myo-inositol degradation into acetyl-CoA; acetyl-CoA from myo-inositol: step 4/7. Functionally, involved in the isomerization of 5-deoxy-glucuronate (5DG) to 5-dehydro-2-deoxy-D-gluconate (DKG or 2-deoxy-5-keto-D-gluconate). The polypeptide is 5-deoxy-glucuronate isomerase (Halalkalibacterium halodurans (strain ATCC BAA-125 / DSM 18197 / FERM 7344 / JCM 9153 / C-125) (Bacillus halodurans)).